Reading from the N-terminus, the 338-residue chain is N-acetyl-gamma-glutamyl-phosphate reductase (338 aa).

The active site involves cysteine 148.

Belongs to the NAGSA dehydrogenase family. Type 1 subfamily.

The protein resides in the cytoplasm. The catalysed reaction is N-acetyl-L-glutamate 5-semialdehyde + phosphate + NADP(+) = N-acetyl-L-glutamyl 5-phosphate + NADPH + H(+). It participates in amino-acid biosynthesis; L-arginine biosynthesis; N(2)-acetyl-L-ornithine from L-glutamate: step 3/4. Functionally, catalyzes the NADPH-dependent reduction of N-acetyl-5-glutamyl phosphate to yield N-acetyl-L-glutamate 5-semialdehyde. This Leptospira borgpetersenii serovar Hardjo-bovis (strain JB197) protein is N-acetyl-gamma-glutamyl-phosphate reductase.